The sequence spans 294 residues: 4-hydroxy-tetrahydrodipicolinate synthase (294 aa).

Threonine 47 is a pyruvate binding site. Tyrosine 135 serves as the catalytic Proton donor/acceptor. Catalysis depends on lysine 163, which acts as the Schiff-base intermediate with substrate. Pyruvate is bound at residue threonine 205.

This sequence belongs to the DapA family. In terms of assembly, homotetramer; dimer of dimers.

The protein localises to the cytoplasm. The enzyme catalyses L-aspartate 4-semialdehyde + pyruvate = (2S,4S)-4-hydroxy-2,3,4,5-tetrahydrodipicolinate + H2O + H(+). It functions in the pathway amino-acid biosynthesis; L-lysine biosynthesis via DAP pathway; (S)-tetrahydrodipicolinate from L-aspartate: step 3/4. Its function is as follows. Catalyzes the condensation of (S)-aspartate-beta-semialdehyde [(S)-ASA] and pyruvate to 4-hydroxy-tetrahydrodipicolinate (HTPA). In Rickettsia peacockii (strain Rustic), this protein is 4-hydroxy-tetrahydrodipicolinate synthase.